The sequence spans 730 residues: Double-strand break repair protein MRE11 (730 aa).

Mn(2+) is bound by residues Asp17, His19, Asp57, and Asn124. The Proton donor role is filled by His125. The Mn(2+) site is built by His213, His241, and His243. Positions 521–730 are disordered; it reads LSGQQKQAQR…SMPARKSKRY (210 aa). A compositionally biased stretch (acidic residues) spans 581 to 591; it reads GDEDNLFEEEE. Residues 595–633 show a composition bias toward low complexity; the sequence is KTTAKRAPTTRATRKTAAATRATTATKASAPAKKSIAAP. Acidic residues predominate over residues 645 to 659; the sequence is SAEEEEDVIMDDDDD. Residues 662–672 show a composition bias toward pro residues; that stretch reads PAPPVKAPPPK. The segment covering 685 to 704 has biased composition (polar residues); that stretch reads TRQTTLNFSQAERPTRTTQK. Over residues 708-719 the composition is skewed to acidic residues; that stretch reads ISDDEISEDDAF.

This sequence belongs to the MRE11/RAD32 family. As to quaternary structure, component of the MRN complex composed of two heterodimers RAD50 and MRE11 associated with a single NBS1. Requires Mn(2+) as cofactor.

Its subcellular location is the nucleus. It localises to the chromosome. The protein localises to the telomere. Functionally, core component of the MRN complex, which plays a central role in double-strand break (DSB) repair, DNA recombination, maintenance of telomere integrity and meiosis. The MRN complex is involved in the repair of DNA double-strand breaks (DSBs) via homologous recombination (HR), an error-free mechanism which primarily occurs during S and G2 phases. The complex (1) mediates the end resection of damaged DNA, which generates proper single-stranded DNA, a key initial steps in HR, and is (2) required for the recruitment of other repair factors and efficient activation of ATM and ATR upon DNA damage. Within the MRN complex, MRE11 possesses both single-strand endonuclease activity and double-strand-specific 3'-5' exonuclease activity. MRE11 first endonucleolytically cleaves the 5' strand at DNA DSB ends to prevent non-homologous end joining (NHEJ) and licence HR. It then generates a single-stranded DNA gap via 3' to 5' exonucleolytic degradation, which is required for single-strand invasion and recombination. The chain is Double-strand break repair protein MRE11 from Chaetomium thermophilum (strain DSM 1495 / CBS 144.50 / IMI 039719) (Thermochaetoides thermophila).